The primary structure comprises 804 residues: RasGAP-activating-like protein 1 (804 aa).

2 C2 domains span residues 1-105 and 116-231; these read MAKS…DSWI and VQGE…KGWF. 10 residues coordinate Ca(2+): Asp-21, Asp-27, Asp-74, Asp-76, Asp-82, Asp-149, Asp-155, Asp-202, Asp-204, and Asp-210. In terms of domain architecture, Ras-GAP spans 317–545; sequence GLAGRFLDYL…SRVRDFLDRL (229 aa). Residues 565-672 enclose the PH domain; the sequence is AIVREGYLLK…WLSALRKASA (108 aa). The Btk-type zinc finger occupies 674-710; it reads NPNKLAACHPGAFRSARWTCCLQAERSAAGCSRTHSA. Zn(2+) contacts are provided by His-682, Cys-693, Cys-694, and Cys-704.

The cofactor is Ca(2+). Highly expressed in thyroid and adrenal medulla, lower expression in brain, spinal cord and trachea. Expressed in melanocytes.

In terms of biological role, probable inhibitory regulator of the Ras-cyclic AMP pathway. Plays a role in dendrite formation by melanocytes. The protein is RasGAP-activating-like protein 1 of Homo sapiens (Human).